The sequence spans 560 residues: Glutamate--tRNA ligase (560 aa).

Positions 108-118 (PNPSGPLHLGH) match the 'HIGH' region motif.

This sequence belongs to the class-I aminoacyl-tRNA synthetase family. Glutamate--tRNA ligase type 2 subfamily.

The protein resides in the cytoplasm. It carries out the reaction tRNA(Glu) + L-glutamate + ATP = L-glutamyl-tRNA(Glu) + AMP + diphosphate. Functionally, catalyzes the attachment of glutamate to tRNA(Glu) in a two-step reaction: glutamate is first activated by ATP to form Glu-AMP and then transferred to the acceptor end of tRNA(Glu). This Methanocorpusculum labreanum (strain ATCC 43576 / DSM 4855 / Z) protein is Glutamate--tRNA ligase.